Consider the following 131-residue polypeptide: Ribonuclease VapC13 (131 aa).

The PINc domain occupies 2-128 (ILVDSNIPMY…RGFDSYPGIK (127 aa)). Asp5 and Asp99 together coordinate Mg(2+).

The protein belongs to the PINc/VapC protein family. Mg(2+) is required as a cofactor.

It localises to the secreted. In terms of biological role, toxic component of a type II toxin-antitoxin (TA) system. An RNase. The cognate antitoxin is VapB13. The sequence is that of Ribonuclease VapC13 from Mycobacterium tuberculosis (strain ATCC 25618 / H37Rv).